The following is a 285-amino-acid chain: Ribosomal RNA small subunit methyltransferase H (285 aa).

S-adenosyl-L-methionine contacts are provided by residues Ala-34–His-36, Asp-51, Phe-75, Asp-96, and His-103. Residues Leu-259 to Pro-285 form a disordered region.

The protein belongs to the methyltransferase superfamily. RsmH family.

Its subcellular location is the cytoplasm. It carries out the reaction cytidine(1402) in 16S rRNA + S-adenosyl-L-methionine = N(4)-methylcytidine(1402) in 16S rRNA + S-adenosyl-L-homocysteine + H(+). Specifically methylates the N4 position of cytidine in position 1402 (C1402) of 16S rRNA. The sequence is that of Ribosomal RNA small subunit methyltransferase H from Thermus thermophilus (strain ATCC 27634 / DSM 579 / HB8).